The sequence spans 596 residues: Interleukin-1 receptor-associated kinase 3 (596 aa).

Residues 41-106 enclose the Death domain; it reads WRGLAERLSS…RAIHLITNYG (66 aa). Ser-110 is subject to Phosphoserine; by IRAK1. Positions 165–452 constitute a Protein kinase domain; sequence FHKDFLIGEG…LESTQASLYF (288 aa). ATP is bound by residues 171–179, Lys-192, 295–298, and Asp-311; these read IGEGEIFEV and SSAN. Residue Ser-467 is modified to Phosphoserine. Residues 560-596 form a disordered region; that stretch reads NIDPSSEAPGHSCRSRPVESSCSSKFSWDEYEQYKKE.

It belongs to the protein kinase superfamily. TKL Ser/Thr protein kinase family. Pelle subfamily. As to quaternary structure, monomer. Homodimer; disulfide-linked. May interact with IRAK4 (when phosphorylated). Interacts (when phosphorylated at Ser-110) with PIN1 (via WW domain) in response to IL33-mediated (but not TLR4 ligand LPS) dendritic cell stimulation. As to expression, expressed in eosinophils, dendritic cells and/or monocytes (at protein level). Expressed predominantly in peripheral blood lymphocytes.

The protein resides in the cytoplasm. It localises to the nucleus. In terms of biological role, putative inactive protein kinase which regulates signaling downstream of immune receptors including IL1R and Toll-like receptors. Inhibits dissociation of IRAK1 and IRAK4 from the Toll-like receptor signaling complex by either inhibiting the phosphorylation of IRAK1 and IRAK4 or stabilizing the receptor complex. Upon IL33-induced lung inflammation, positively regulates expression of IL6, CSF3, CXCL2 and CCL5 mRNAs in dendritic cells. This chain is Interleukin-1 receptor-associated kinase 3, found in Homo sapiens (Human).